A 325-amino-acid chain; its full sequence is MSRYSRITGTGSSLPPRRLTNADLVAELAGRGVETSDQWIVERTGIRARHFAERDVCSSDLGLEAARQALDAAGVQPADIDLIIVATSTPDMVFPSTACILQNKLGANGCPAFDVQAVCSGFIYALTVADSMIRSGAARRALVVGSEVFSRLLDFNDRTTCVLFGDGAGAVVLEASETPGILASDLHADGRHVGILCVPGNVYGGQILGDPLLKMDGQAVFKLAVGVLDKAARAVLDKAGLKESDVDWLIPHQANIRIMQGTAKKLGLPMDRVVVTVDQHGNTSAASIPLALDHAVRSGQARPGQNLLLEGVGGGFTWGAVLLTL.

Active-site residues include Cys119 and His252. Residues 253–257 are ACP-binding; the sequence is QANIR. Residue Asn282 is part of the active site.

It belongs to the thiolase-like superfamily. FabH family. As to quaternary structure, homodimer.

Its subcellular location is the cytoplasm. The enzyme catalyses malonyl-[ACP] + acetyl-CoA + H(+) = 3-oxobutanoyl-[ACP] + CO2 + CoA. It functions in the pathway lipid metabolism; fatty acid biosynthesis. Catalyzes the condensation reaction of fatty acid synthesis by the addition to an acyl acceptor of two carbons from malonyl-ACP. Catalyzes the first condensation reaction which initiates fatty acid synthesis and may therefore play a role in governing the total rate of fatty acid production. Possesses both acetoacetyl-ACP synthase and acetyl transacylase activities. Its substrate specificity determines the biosynthesis of branched-chain and/or straight-chain of fatty acids. The polypeptide is Beta-ketoacyl-[acyl-carrier-protein] synthase III (Paracidovorax citrulli (strain AAC00-1) (Acidovorax citrulli)).